The primary structure comprises 567 residues: Pyrethroid hydrolase Ces2e (567 aa).

Positions 1–36 are cleaved as a signal peptide; that stretch reads MAQTRAWKSIMPLESLPGWLNAVVWGLLLLFCQVQG. Gln-37 bears the Pyrrolidone carboxylic acid mark. A disulfide bridge links Cys-105 with Cys-132. Ser-237 acts as the Acyl-ester intermediate in catalysis. An intrachain disulfide couples Cys-289 to Cys-300. Active-site charge relay system residues include Glu-354 and His-465.

The protein belongs to the type-B carboxylesterase/lipase family. Expressed in liver.

It localises to the microsome. It catalyses the reaction all-trans-retinyl hexadecanoate + H2O = all-trans-retinol + hexadecanoate + H(+). The catalysed reaction is (-)-trans-permethrin + H2O = (3-phenoxyphenyl)methanol + (1S,3R)-3-(2,2-dichlorovinyl)-2,2-dimethylcyclopropanecarboxylate + H(+). Its function is as follows. Carboxylesterase that catalyzes the hydrolysis of pyrethroids pesticides. Hydrolyzes trans-permethrin at a rate about 22-fold higher than cis-permethrin. Also hydrolyzes trans-cypermethrin. Hydrolyzes retinyl esters. In Rattus norvegicus (Rat), this protein is Pyrethroid hydrolase Ces2e.